Here is a 251-residue protein sequence, read N- to C-terminus: Imidazole glycerol phosphate synthase subunit HisF (251 aa).

Catalysis depends on residues Asp-12 and Asp-131.

It belongs to the HisA/HisF family. In terms of assembly, heterodimer of HisH and HisF.

It is found in the cytoplasm. It carries out the reaction 5-[(5-phospho-1-deoxy-D-ribulos-1-ylimino)methylamino]-1-(5-phospho-beta-D-ribosyl)imidazole-4-carboxamide + L-glutamine = D-erythro-1-(imidazol-4-yl)glycerol 3-phosphate + 5-amino-1-(5-phospho-beta-D-ribosyl)imidazole-4-carboxamide + L-glutamate + H(+). It functions in the pathway amino-acid biosynthesis; L-histidine biosynthesis; L-histidine from 5-phospho-alpha-D-ribose 1-diphosphate: step 5/9. Its function is as follows. IGPS catalyzes the conversion of PRFAR and glutamine to IGP, AICAR and glutamate. The HisF subunit catalyzes the cyclization activity that produces IGP and AICAR from PRFAR using the ammonia provided by the HisH subunit. This chain is Imidazole glycerol phosphate synthase subunit HisF, found in Streptomyces griseus subsp. griseus (strain JCM 4626 / CBS 651.72 / NBRC 13350 / KCC S-0626 / ISP 5235).